Consider the following 118-residue polypeptide: Small ribosomal subunit protein uS13 (118 aa).

The interval 94-118 (SLPVRGQRSKTNARTRKGPRKAIKK) is disordered.

Belongs to the universal ribosomal protein uS13 family. As to quaternary structure, part of the 30S ribosomal subunit. Forms a loose heterodimer with protein S19. Forms two bridges to the 50S subunit in the 70S ribosome.

Functionally, located at the top of the head of the 30S subunit, it contacts several helices of the 16S rRNA. In the 70S ribosome it contacts the 23S rRNA (bridge B1a) and protein L5 of the 50S subunit (bridge B1b), connecting the 2 subunits; these bridges are implicated in subunit movement. Contacts the tRNAs in the A and P-sites. In Psychromonas ingrahamii (strain DSM 17664 / CCUG 51855 / 37), this protein is Small ribosomal subunit protein uS13.